A 556-amino-acid chain; its full sequence is Endonuclease/exonuclease/phosphatase family domain-containing protein 1 (556 aa).

A HhH domain is found at 39–68; that stretch reads ERLNINTATEEELMTLPGVTRQVAQNIVEY.

This Xenopus laevis (African clawed frog) protein is Endonuclease/exonuclease/phosphatase family domain-containing protein 1 (eepd1).